Reading from the N-terminus, the 357-residue chain is Protein AAR2 homolog (357 aa).

It belongs to the AAR2 family.

The chain is Protein AAR2 homolog from Caenorhabditis elegans.